The chain runs to 241 residues: Thiamine import ATP-binding protein ThiQ (241 aa).

An ABC transporter domain is found at 7–235; sequence IRLSDVRFSY…AGPEALRHYI (229 aa). Residue 37-44 coordinates ATP; sequence GPSGSGKS.

This sequence belongs to the ABC transporter superfamily. Thiamine importer (TC 3.A.1.19.1) family. As to quaternary structure, the complex is composed of two ATP-binding proteins (ThiQ), two transmembrane proteins (ThiP) and a solute-binding protein (ThiB).

It localises to the cell inner membrane. The catalysed reaction is thiamine(out) + ATP + H2O = thiamine(in) + ADP + phosphate + H(+). Part of the ABC transporter complex ThiBPQ involved in thiamine import. Responsible for energy coupling to the transport system. This Brucella melitensis biotype 1 (strain ATCC 23456 / CCUG 17765 / NCTC 10094 / 16M) protein is Thiamine import ATP-binding protein ThiQ.